The sequence spans 168 residues: Phosphopantetheine adenylyltransferase (168 aa).

Thr-14 is a substrate binding site. ATP contacts are provided by residues 14 to 15 (TF) and His-22. Substrate contacts are provided by Lys-46, Leu-78, and Arg-92. ATP is bound by residues 93–95 (GLR), Glu-103, and 128–134 (YSFISSS).

It belongs to the bacterial CoaD family. In terms of assembly, homohexamer. Requires Mg(2+) as cofactor.

Its subcellular location is the cytoplasm. It carries out the reaction (R)-4'-phosphopantetheine + ATP + H(+) = 3'-dephospho-CoA + diphosphate. Its pathway is cofactor biosynthesis; coenzyme A biosynthesis; CoA from (R)-pantothenate: step 4/5. Functionally, reversibly transfers an adenylyl group from ATP to 4'-phosphopantetheine, yielding dephospho-CoA (dPCoA) and pyrophosphate. This Xanthomonas campestris pv. campestris (strain 8004) protein is Phosphopantetheine adenylyltransferase.